The following is a 257-amino-acid chain: uncharacterized protein (257 aa).

Residues 1 to 22 (MRYLKRLSWYISILILIVVIAG) form the signal peptide. A lipid anchor (N-palmitoyl cysteine) is attached at Cys-23. Residue Cys-23 is the site of S-diacylglycerol cysteine attachment.

Belongs to the staphylococcal tandem lipoprotein family.

The protein resides in the cell membrane. This is an uncharacterized protein from Staphylococcus aureus (strain N315).